A 135-amino-acid polypeptide reads, in one-letter code: L-ectoine synthase (135 aa).

This sequence belongs to the ectoine synthase family.

It carries out the reaction (2S)-4-acetamido-2-aminobutanoate = L-ectoine + H2O. It functions in the pathway amine and polyamine biosynthesis; ectoine biosynthesis; L-ectoine from L-aspartate 4-semialdehyde: step 3/3. Its function is as follows. Catalyzes the circularization of gamma-N-acetyl-alpha,gamma-diaminobutyric acid (ADABA) to ectoine (1,4,5,6-tetrahydro-2-methyl-4-pyrimidine carboxylic acid), which is an excellent osmoprotectant. The polypeptide is L-ectoine synthase (Saccharopolyspora erythraea (strain ATCC 11635 / DSM 40517 / JCM 4748 / NBRC 13426 / NCIMB 8594 / NRRL 2338)).